Here is a 98-residue protein sequence, read N- to C-terminus: Large ribosomal subunit protein uL23 (98 aa).

This sequence belongs to the universal ribosomal protein uL23 family. Part of the 50S ribosomal subunit. Contacts protein L29, and trigger factor when it is bound to the ribosome.

In terms of biological role, one of the early assembly proteins it binds 23S rRNA. One of the proteins that surrounds the polypeptide exit tunnel on the outside of the ribosome. Forms the main docking site for trigger factor binding to the ribosome. The sequence is that of Large ribosomal subunit protein uL23 from Acidothermus cellulolyticus (strain ATCC 43068 / DSM 8971 / 11B).